Here is a 2083-residue protein sequence, read N- to C-terminus: Nonribosomal peptide synthetase sidD (2083 aa).

An adenylation 1 region spans residues 251–650 (TYRQIDQYSS…GEIESQLRAR (400 aa)). The 77-residue stretch at 764–840 (RELSDLERRL…AMASVVRICD (77 aa)) folds into the Carrier 1 domain. Residue S801 is modified to O-(pantetheine 4'-phosphoryl)serine. Residues 876–1146 (EDIYPCTPTQ…IATVPIRVRI (271 aa)) form a condensation 1 region. Positions 1336–1421 (LSPIGCVGEL…TEIERHLAEH (86 aa)) are adenylation 2. Positions 1557–1633 (NHLSASESIL…DAARVMKVDE (77 aa)) constitute a Carrier 2 domain. S1594 carries the O-(pantetheine 4'-phosphoryl)serine modification. The tract at residues 1674-1946 (DVLPVTDSQD…YQLTPVRVPF (273 aa)) is condensation 2.

This sequence belongs to the NRP synthetase family.

The protein operates within siderophore biosynthesis. Functionally, nonribosomal peptide synthetase; part of the siderophore biosynthetic pathway. Aspergillus fumigatus produces four types of siderophores, low-molecular-mass iron chelators, including excreted fusarinine C (FsC) and triacetylfusarinine C (TAFC) for iron uptake; and intacellular ferricrocin (FC) for hyphal and hydroxyferricrocin (HFC) for conidial iron distribution and storage. TAFC consists of three N(2)-acetyl-N(5)-anhydromevalonyl-N(5)-hydroxyornithine residues cyclically linked by ester bonds; FC is a cyclic hexapeptide with the structure Gly-Ser-Gly-(N(5)-acetyl-N(5)-hydroxyornithine)x3. The biosynthesis of all four siderophores depends on the hydroxylation of ornithine, catalyzed by the monooxygenase sidA. Subsequently, the pathways for biosynthesis of extra- and intracellular siderophores split. For biosynthesis of extracellular siderophores, the transacylase sidF transfers anhydromevalonyl to N(5)-hydroxyornithine. The required anhydromevalonyl-CoA moiety is derived from mevalonate by CoA ligation and dehydration catalyzed by sidI and sidH respectively. The acetylation of N(5)-hydroxyornithine for FC biosynthesis involves the constitutively expressed sidL. FC is hydroxylated to HFC by an as yet uncharacterized enzyme during conidiation. Assembly of fusarinine C (FsC) and FC is catalyzed by two different nonribosomal peptide synthetases (NRPS), sidD and sidC respectively. Subsequently, sidG catalyzes N2-acetylation of FsC for forming TAFC. Both extra- and intracellular siderophores are crucial for growth during iron limitation and virulence. This chain is Nonribosomal peptide synthetase sidD, found in Aspergillus fumigatus (strain ATCC MYA-4609 / CBS 101355 / FGSC A1100 / Af293) (Neosartorya fumigata).